Here is a 974-residue protein sequence, read N- to C-terminus: Glycine dehydrogenase (decarboxylating) (974 aa).

Lys720 is subject to N6-(pyridoxal phosphate)lysine.

This sequence belongs to the GcvP family. The glycine cleavage system is composed of four proteins: P, T, L and H. Pyridoxal 5'-phosphate is required as a cofactor.

It catalyses the reaction N(6)-[(R)-lipoyl]-L-lysyl-[glycine-cleavage complex H protein] + glycine + H(+) = N(6)-[(R)-S(8)-aminomethyldihydrolipoyl]-L-lysyl-[glycine-cleavage complex H protein] + CO2. The glycine cleavage system catalyzes the degradation of glycine. The P protein binds the alpha-amino group of glycine through its pyridoxal phosphate cofactor; CO(2) is released and the remaining methylamine moiety is then transferred to the lipoamide cofactor of the H protein. This is Glycine dehydrogenase (decarboxylating) from Cupriavidus metallidurans (strain ATCC 43123 / DSM 2839 / NBRC 102507 / CH34) (Ralstonia metallidurans).